The primary structure comprises 452 residues: Probable 1,4-beta-D-glucan cellobiohydrolase A (452 aa).

The N-terminal stretch at 1-17 (MHQRALLFSALAVAANA) is a signal peptide. Asn81 is a glycosylation site (N-linked (GlcNAc...) asparagine). Glu226 serves as the catalytic Nucleophile. The active-site Proton donor is Glu231. Asn284 carries an N-linked (GlcNAc...) asparagine glycan. Residues 405-431 (ADPSKPGVARGTCEHGAGDPENVESQH) are disordered.

Belongs to the glycosyl hydrolase 7 (cellulase C) family.

The protein localises to the secreted. The catalysed reaction is Hydrolysis of (1-&gt;4)-beta-D-glucosidic linkages in cellulose and cellotetraose, releasing cellobiose from the non-reducing ends of the chains.. Functionally, the biological conversion of cellulose to glucose generally requires three types of hydrolytic enzymes: (1) Endoglucanases which cut internal beta-1,4-glucosidic bonds; (2) Exocellobiohydrolases that cut the disaccharide cellobiose from the non-reducing end of the cellulose polymer chain; (3) Beta-1,4-glucosidases which hydrolyze the cellobiose and other short cello-oligosaccharides to glucose. The polypeptide is Probable 1,4-beta-D-glucan cellobiohydrolase A (cbhA) (Aspergillus fumigatus (strain CBS 144.89 / FGSC A1163 / CEA10) (Neosartorya fumigata)).